Consider the following 1416-residue polypeptide: Tiny macrocysts protein B (1416 aa).

Helical transmembrane passes span 47–67 (ILTI…GFKH), 93–113 (FGYL…ILGF), 140–160 (FVSF…LIGL), 185–205 (ANLP…IVAF), 231–251 (VTVL…DFVP), 253–273 (LTSI…IIVL), 285–305 (SGFY…MGIN), and 315–335 (ITIV…MFYF). Basic and acidic residues predominate over residues 356-372 (LKDANKKGKRNSVEKES). Disordered stretches follow at residues 356 to 377 (LKDA…PTSK) and 662 to 691 (IEKS…RRGK). The next 2 membrane-spanning stretches (helical) occupy residues 706–726 (WLMI…LVVF) and 953–973 (AILY…AVLF). 2 disordered regions span residues 1018 to 1103 (RDNL…RPLM) and 1119 to 1144 (NVRL…ATRT). Over residues 1024–1039 (TTDDDGRDDHLGEDDN) the composition is skewed to acidic residues. Composition is skewed to low complexity over residues 1048–1062 (NNNN…NNNN) and 1083–1094 (SSSGSNVLNTSS). Basic and acidic residues predominate over residues 1123–1144 (QAKDEEITNGGGERKGSDATRT). A run of 3 helical transmembrane segments spans residues 1179–1199 (ILAT…TFTV), 1325–1345 (WFLA…FTYF), and 1358–1378 (VLTA…VVLF).

It is found in the membrane. In terms of biological role, regulator of the cAMP signaling pathway specific to sexual development. Controls the levels of external cAMP by regulating the expression of phosphodiesterase pdsA and its inhibitor pdiA. This chain is Tiny macrocysts protein B (tmcB), found in Dictyostelium discoideum (Social amoeba).